A 270-amino-acid polypeptide reads, in one-letter code: Myelin protein zero-like protein 1 (270 aa).

Positions 1–35 (MAEAVGAVALIAAPARRRWLWSVLAAMLGLLTARI) are cleaved as a signal peptide. Positions 36-151 (SALEVHTPKE…DIVVRPGHIR (116 aa)) constitute an Ig-like V-type domain. Topologically, residues 36-162 (SALEVHTPKE…HVVEIDNLLV (127 aa)) are extracellular. 2 N-linked (GlcNAc...) asparagine glycosylation sites follow: asparagine 50 and asparagine 130. Cysteine 58 and cysteine 135 are oxidised to a cystine. A helical membrane pass occupies residues 163–183 (FLVWVVVGTVTAVVLGLTLLI). Topologically, residues 184–270 (SLVLVVLYRR…SVVYADIRKD (87 aa)) are cytoplasmic. Residues 201–257 (TGCSTSERLSPVKQAPRKCPSDTEGLVKSPPSAGSHQGPVIYAQLDHSGGHHSGKIN) form a disordered region. Residues serine 204, serine 206, serine 210, and serine 221 each carry the phosphoserine modification. Residues 240-245 (VIYAQL) carry the ITIM motif 1 motif. Tyrosine 242 is subject to Phosphotyrosine. At serine 261 the chain carries Phosphoserine. The short motif at 262–267 (VVYADI) is the ITIM motif 2 element. Phosphotyrosine is present on tyrosine 264.

Belongs to the myelin P0 protein family. Interacts with phosphorylated PTPN11/SHP-2. Phosphorylated on tyrosine residues upon stimulation with pervanadate and concanavalin-A (ConA). Phosphorylation at Tyr-242 and Tyr-264 is required for interaction with PTPN11/SHP-2. Dephosphorylated by PTPN11/SHP-2 (in vitro).

It localises to the membrane. Functionally, cell surface receptor, which is involved in signal transduction processes. Recruits PTPN11/SHP-2 to the cell membrane and is a putative substrate of PTPN11/SHP-2. Is a major receptor for concanavalin-A (ConA) and is involved in cellular signaling induced by ConA, which probably includes Src family tyrosine-protein kinases. Isoform 2 seems to have a dominant negative role; it blocks tyrosine phosphorylation of MPZL1 induced by ConA. Isoform 1, but not isoform 2, may be involved in regulation of integrin-mediated cell motility. The sequence is that of Myelin protein zero-like protein 1 (Mpzl1) from Mus musculus (Mouse).